A 225-amino-acid polypeptide reads, in one-letter code: Chlorosome protein J (225 aa).

Positions 1-95 (MIIYINDKPC…TIRVLTRAEK (95 aa)) constitute a 2Fe-2S ferredoxin-type domain. C33, C39, C42, and C77 together coordinate [2Fe-2S] cluster.

The cofactor is [2Fe-2S] cluster.

The protein resides in the chlorosome. Could play a direct role in the oxidation or reduction of the quenching species formed in the chlorosome. In Chlorobaculum tepidum (strain ATCC 49652 / DSM 12025 / NBRC 103806 / TLS) (Chlorobium tepidum), this protein is Chlorosome protein J (csmJ).